The following is a 340-amino-acid chain: Cytochrome P450 monooxygenase cheG (340 aa).

A glycan (N-linked (GlcNAc...) asparagine) is linked at Asn-25. The chain crosses the membrane as a helical span at residues 37-57 (MLLGIPTVILSLTPAVLRLLI). Cys-283 serves as a coordination point for heme. The disordered stretch occupies residues 308 to 340 (LPPGQGKPEKGSMPNGSMSPDTKAKVLFRSRKL). Asn-322 carries N-linked (GlcNAc...) asparagine glycosylation.

The protein belongs to the cytochrome P450 family. Heme is required as a cofactor.

Its subcellular location is the membrane. It participates in secondary metabolite biosynthesis. In terms of biological role, cytochrome P450 monooxygenase; part of the gene cluster that mediates the biosynthesis of chaetoglobosin A which has a unique inhibitory activity against actin polymerization in mammalian cells. Chaetoglobosin A and its intermediates are involved in the morphological differentiation of C.globosum. The first step of the pathway is the synthesis of prochaetoglobosin I via condensation of one acetyl-CoA, 8 malonyl-CoA, and a L-tryptophan molecule by the PKS-NRPS hybrid synthetase cheA, followed by reduction of backbone double bond to install desired geometry by the enoyl reductase cheB. Further multiple oxidation steps performed by the cytochrome P450 monooxygenases cheE and cheG, as well as by the FAD-linked oxidoreductase cheF, lead to the formation of chaetoglobosin A. Depending on the order of action of these reductases, distinct intermediates can be identified. Within the pathway, the cytochrome P450 monooxygenase cheE catalyzes a stereospecific epoxidation on prochaetoglobosin I, cytoglobosin D, and chaetoglobosin J intermediates. The FAD-linked oxidoreductase cheF performs dehydrogenation of the C-20 hydroxyl groups in the 20-dihyrochaetoglobosin A and cytoglobosin D intermediates. Finally, the cytochrome P450 monooxygenase cheG can catalyze the stereospecific dihydroxylation of prochaetoglobosin I and prochaetoglobosin IV at C-19 and C-20, respectively. The Diels-Alderase cheD may play a role in the post-PKS-NRPS biosynthetic steps catalyzing Diels-Alder cyclization. The chain is Cytochrome P450 monooxygenase cheG from Chaetomium globosum (strain ATCC 6205 / CBS 148.51 / DSM 1962 / NBRC 6347 / NRRL 1970) (Soil fungus).